The following is a 612-amino-acid chain: Coagulation factor XII (612 aa).

Residues 1–19 (MRALLLLGALLVSLESTVS) form the signal peptide. The 49-residue stretch at 42 to 90 (VTGEPCHFPFQYHRQLHHKCIHRGRPGPRPWCATTPNFEKDQRWAYCLE) folds into the Fibronectin type-II domain. 20 disulfide bridges follow: Cys47–Cys73, Cys61–Cys88, Cys98–Cys110, Cys104–Cys119, Cys121–Cys130, Cys135–Cys163, Cys161–Cys170, Cys178–Cys189, Cys183–Cys198, Cys200–Cys209, Cys217–Cys306, Cys240–Cys288, Cys268–Cys301, Cys355–Cys482, Cys393–Cys409, Cys401–Cys471, Cys432–Cys435, Cys498–Cys566, Cys529–Cys545, and Cys556–Cys587. The EGF-like 1 domain occupies 94–131 (VKDHCSKHNPCQKGGTCVNMPDGPRCICADHFTGKHCQ). The O-linked (Fuc) threonine glycan is linked to Thr109. In terms of domain architecture, Fibronectin type-I spans 133–173 (EKCFEPQFFRFFHENEIWHRLEPAGVVKCQCKGPNAQCKPL). The region spanning 174–210 (ASQVCRTNPCLNGGSCLQAEGHRLCRCAPSFAGRLCD) is the EGF-like 2 domain. The Kringle domain maps to 217-306 (CYDDRDRGLS…SWNYCRLAPC (90 aa)). Residues Asn251 and Asn282 are each glycosylated (N-linked (GlcNAc...) asparagine). Residues 369–611 (VVGGLVALPG…YLAWIREHTA (243 aa)) form the Peptidase S1 domain. His408 functions as the Charge relay system in the catalytic mechanism. N-linked (GlcNAc...) asparagine glycosylation is present at Asn429. The active-site Charge relay system is Asp457. Ser560 serves as the catalytic Charge relay system.

This sequence belongs to the peptidase S1 family. In terms of assembly, interacts with HRG; the interaction, which is enhanced in the presence of zinc ions and inhibited by heparin-binding, inhibits factor XII autoactivation and contact-initiated coagulation. O- and N-glycosylated.

The protein localises to the secreted. The enzyme catalyses Selective cleavage of Arg-|-Ile bonds in factor VII to form factor VIIa and factor XI to form factor XIa.. With respect to regulation, activity is promoted in the presence of negatively charged surfaces. Its function is as follows. Factor XII is a serum glycoprotein that participates in the initiation of blood coagulation, fibrinolysis, and the generation of bradykinin and angiotensin. Prekallikrein is cleaved by factor XII to form kallikrein, which then cleaves factor XII first to alpha-factor XIIa and then to beta-factor XIIa. Alpha-factor XIIa activates factor XI to factor XIa. This Bos taurus (Bovine) protein is Coagulation factor XII (F12).